Consider the following 918-residue polypeptide: UPF0182 protein CPR_0011 (918 aa).

A run of 7 helical transmembrane segments spans residues 8-28, 46-66, 91-111, 151-171, 200-220, 243-263, and 271-291; these read TVLI…NFII, LIAI…VIAI, FLLS…TTQW, AISL…ALGF, LAVL…LKSY, IFYK…FISI, and IIIS…VAIF.

This sequence belongs to the UPF0182 family.

It localises to the cell membrane. This Clostridium perfringens (strain SM101 / Type A) protein is UPF0182 protein CPR_0011.